Consider the following 375-residue polypeptide: Trichodiene synthase (375 aa).

The protein belongs to the trichodiene synthase family.

The enzyme catalyses (2E,6E)-farnesyl diphosphate = trichodiene + diphosphate. It functions in the pathway sesquiterpene biosynthesis; trichothecene biosynthesis. Its function is as follows. TS is a member of the terpene cyclase group of enzymes. It catalyzes the isomerization and cyclization of farnesyl pyro-phosphate to form trichodiene, the first cyclic intermediate in the biosynthetic pathway for trichothecenes. It serves to branch trichothecene biosynthesis from the isoprenoid pathway. The sequence is that of Trichodiene synthase (TRI5) from Fusarium boothii.